A 167-amino-acid chain; its full sequence is 2-C-methyl-D-erythritol 2,4-cyclodiphosphate synthase (167 aa).

Positions 9 and 11 each coordinate a divalent metal cation. 4-CDP-2-C-methyl-D-erythritol 2-phosphate-binding positions include 9–11 and 35–36; these read DVH and HS. Position 43 (histidine 43) interacts with a divalent metal cation. Residues 57-59, 62-66, 133-136, phenylalanine 140, and arginine 143 contribute to the 4-CDP-2-C-methyl-D-erythritol 2-phosphate site; these read DIG, FPDTD, and TTTE.

Belongs to the IspF family. In terms of assembly, homotrimer. A divalent metal cation serves as cofactor.

The catalysed reaction is 4-CDP-2-C-methyl-D-erythritol 2-phosphate = 2-C-methyl-D-erythritol 2,4-cyclic diphosphate + CMP. Its pathway is isoprenoid biosynthesis; isopentenyl diphosphate biosynthesis via DXP pathway; isopentenyl diphosphate from 1-deoxy-D-xylulose 5-phosphate: step 4/6. Its function is as follows. Involved in the biosynthesis of isopentenyl diphosphate (IPP) and dimethylallyl diphosphate (DMAPP), two major building blocks of isoprenoid compounds. Catalyzes the conversion of 4-diphosphocytidyl-2-C-methyl-D-erythritol 2-phosphate (CDP-ME2P) to 2-C-methyl-D-erythritol 2,4-cyclodiphosphate (ME-CPP) with a corresponding release of cytidine 5-monophosphate (CMP). This is 2-C-methyl-D-erythritol 2,4-cyclodiphosphate synthase from Glaesserella parasuis serovar 5 (strain SH0165) (Haemophilus parasuis).